We begin with the raw amino-acid sequence, 344 residues long: Dihydroorotate dehydrogenase (quinone) (344 aa).

Residues 65-69 and T89 contribute to the FMN site; that span reads AGLDK. K69 is a binding site for substrate. Residue 114–118 participates in substrate binding; it reads NRMGF. Residues N145 and N178 each coordinate FMN. N178 lines the substrate pocket. The active-site Nucleophile is S181. N183 contributes to the substrate binding site. K223 and T251 together coordinate FMN. 252–253 contributes to the substrate binding site; the sequence is NT. Residues G274, G303, and 324-325 each bind FMN; that span reads YS.

The protein belongs to the dihydroorotate dehydrogenase family. Type 2 subfamily. Monomer. The cofactor is FMN.

It is found in the cell membrane. It carries out the reaction (S)-dihydroorotate + a quinone = orotate + a quinol. The protein operates within pyrimidine metabolism; UMP biosynthesis via de novo pathway; orotate from (S)-dihydroorotate (quinone route): step 1/1. Catalyzes the conversion of dihydroorotate to orotate with quinone as electron acceptor. The sequence is that of Dihydroorotate dehydrogenase (quinone) from Cupriavidus necator (strain ATCC 17699 / DSM 428 / KCTC 22496 / NCIMB 10442 / H16 / Stanier 337) (Ralstonia eutropha).